The sequence spans 765 residues: Multifunctional tryptophan biosynthesis protein (765 aa).

The Glutamine amidotransferase type-1 domain occupies 2-196 (ATLLIDNYDS…LSLRGGNWDE (195 aa)). Residue 53–55 (GPG) participates in L-glutamine binding. The active-site Nucleophile; for GATase activity is Cys81. Residues Gln85 and 131 to 132 (SL) each bind L-glutamine. Residues His170 and Glu172 each act as for GATase activity in the active site. The segment at 231-494 (TILSRIYAQR…NLKEFVAELL (264 aa)) is indole-3-glycerol phosphate synthase. Residues 512 to 765 (QVKICGISSV…VEKAKSINLQ (254 aa)) are N-(5'-phosphoribosyl)anthranilate isomerase.

It carries out the reaction N-(5-phospho-beta-D-ribosyl)anthranilate = 1-(2-carboxyphenylamino)-1-deoxy-D-ribulose 5-phosphate. The enzyme catalyses 1-(2-carboxyphenylamino)-1-deoxy-D-ribulose 5-phosphate + H(+) = (1S,2R)-1-C-(indol-3-yl)glycerol 3-phosphate + CO2 + H2O. The catalysed reaction is chorismate + L-glutamine = anthranilate + pyruvate + L-glutamate + H(+). The protein operates within amino-acid biosynthesis; L-tryptophan biosynthesis; L-tryptophan from chorismate: step 1/5. It participates in amino-acid biosynthesis; L-tryptophan biosynthesis; L-tryptophan from chorismate: step 3/5. It functions in the pathway amino-acid biosynthesis; L-tryptophan biosynthesis; L-tryptophan from chorismate: step 4/5. Trifunctional enzyme bearing the Gln amidotransferase (GATase) domain of anthranilate synthase, indole-glycerolphosphate synthase, and phosphoribosylanthranilate isomerase activities. This Phycomyces blakesleeanus protein is Multifunctional tryptophan biosynthesis protein (trp1).